Reading from the N-terminus, the 290-residue chain is OTU domain-containing protein 6A (290 aa).

Residues 27–117 (QTLKASVPKN…RRHQERMPAA (91 aa)) form a disordered region. Over residues 49 to 68 (SRLEAEMEQRHKQELEKFGE) the composition is skewed to basic and acidic residues. Over residues 95-108 (KAQKRRDRRAHQER) the composition is skewed to basic residues. The 135-residue stretch at 142 to 276 (LEMKTIPADG…GEHYNSVKPI (135 aa)) folds into the OTU domain. Positions 147–153 (IPADGHC) are cys-loop. Residue aspartate 150 is part of the active site. Cysteine 153 acts as the Nucleophile in catalysis. The variable-loop stretch occupies residues 211–221 (IVHNASWGGQL). The segment at 259-269 (YLHYACDFGEH) is his-loop. The active site involves histidine 269.

The catalysed reaction is Thiol-dependent hydrolysis of ester, thioester, amide, peptide and isopeptide bonds formed by the C-terminal Gly of ubiquitin (a 76-residue protein attached to proteins as an intracellular targeting signal).. Deubiquitinating enzyme that hydrolyzes 'Lys-27'-, 'Lys-29'- and 'Lys-33'-linked polyubiquitin chains. Also able to hydrolyze 'Lys-11'-linked ubiquitin chains. The protein is OTU domain-containing protein 6A (Otud6a) of Mus musculus (Mouse).